The chain runs to 297 residues: HTH-type transcriptional regulator ArgP (297 aa).

The region spanning 4 to 60 (PDYRTLQALDAVIRERGFERAAQKLCITQSAVSQRIKQLENMFGQPLLVRTVPPRPT) is the HTH lysR-type domain. A DNA-binding region (H-T-H motif) is located at residues 21-40 (FERAAQKLCITQSAVSQRIK).

It belongs to the LysR transcriptional regulatory family. As to quaternary structure, homodimer.

Controls the transcription of genes involved in arginine and lysine metabolism. The protein is HTH-type transcriptional regulator ArgP of Citrobacter koseri (strain ATCC BAA-895 / CDC 4225-83 / SGSC4696).